Reading from the N-terminus, the 302-residue chain is Putative cyclin-D6-1 (302 aa).

This sequence belongs to the cyclin family. Cyclin D subfamily.

The chain is Putative cyclin-D6-1 (CYCD6-1) from Arabidopsis thaliana (Mouse-ear cress).